The sequence spans 61 residues: Bacteriocin mesentericin Y105 (61 aa).

The N-terminal stretch at 1–24 is a signal peptide; it reads MTNMKSVEAYQQLDNQNLKKVVGG. A disulfide bond links Cys33 and Cys38.

It belongs to the bacteriocin class IIA/YGNGV family.

It is found in the secreted. Bacteriocin active against Listeria monocytogenes. This is Bacteriocin mesentericin Y105 (mesY) from Leuconostoc mesenteroides.